A 305-amino-acid chain; its full sequence is Protoheme IX farnesyltransferase 2 (305 aa).

8 helical membrane-spanning segments follow: residues 31–51 (VVMLLLLTALVGMCLASETWI), 53–73 (WKILLAGLTGIGFLSSAAAVI), 103–123 (ALVFAGVLTVVGYLILELWVN), 125–145 (LTALLTLASLVGYAFIYTMYL), 152–172 (NIVIGGLAGAAPPLLGWTAVT), 179–199 (ALLLVLIIFIWTPPHFWALAI), 231–251 (VLLALISVLPYLIGMTGAIYL), and 277–297 (AMKTFKFSIIHLMVLFVVLLV).

Belongs to the UbiA prenyltransferase family. Protoheme IX farnesyltransferase subfamily.

The protein resides in the cell inner membrane. It carries out the reaction heme b + (2E,6E)-farnesyl diphosphate + H2O = Fe(II)-heme o + diphosphate. It functions in the pathway porphyrin-containing compound metabolism; heme O biosynthesis; heme O from protoheme: step 1/1. Its function is as follows. Converts heme B (protoheme IX) to heme O by substitution of the vinyl group on carbon 2 of heme B porphyrin ring with a hydroxyethyl farnesyl side group. The protein is Protoheme IX farnesyltransferase 2 of Pseudoalteromonas atlantica (strain T6c / ATCC BAA-1087).